The chain runs to 621 residues: MALLQISEPGESPAPHQRRLAVGIDLGTTNSLVAAVRSSVPEVLPDEQGRPLLPSVVRYLPAGGAQIGYKAQVEAVRDPKNTIVSVKRFMGRGLKDVAHIENTPYDFVDAPGMVQLKTVAGVKSPVEVSAEILATLRQRAEDTLGDDLVGAVITVPAYFDDAQRQATKDAARLAGLNVLRLLNEPTAAAIAYGLDNAAEGVYAVYDLGGGTFDISVLKLTKGVFEVMSTGGDSALGGDDFDQRIACWIVEQAGLQPLSAEDMRLLLNKARAAKEWLSGADSTEVDAVLSTGETVHLVLTAETFAELTANLVQKTLAPVRRALRDAGVAVDEIQGVVLVGGATRMPVIRRAVAQLFGRAPLTNLDPDQVVAIGAAMQASLLAGNRAAGDDWLLLDVIPLSLGVETMGGLVEKIIPRNSTIPVARAQEFTTFKDGQTAMAIHVLQGERELAGDCRSLARFELRGIPPMVAGAARIRVTYQVDADGLLSVSARETVSGVEASIAVKPSYGLGDDDIARMLQEGFQSAEEDMRRRALAEERVEGERLLEALSHALDADGDLLSADERAAVDAQVAALRVTLQGEDHRAIKDAVDALSHGTDEFAARRMDRGIRAALAGKRIEELG.

Belongs to the heat shock protein 70 family.

In terms of biological role, chaperone involved in the maturation of iron-sulfur cluster-containing proteins. Has a low intrinsic ATPase activity which is markedly stimulated by HscB. The protein is Chaperone protein HscA homolog of Ralstonia nicotianae (strain ATCC BAA-1114 / GMI1000) (Ralstonia solanacearum).